The sequence spans 906 residues: Protein translocase subunit SecA (906 aa).

Residues Gln87, 105–109 (GEGKT), and Asp512 each bind ATP. Positions 839–896 (LEEQQRQQSEAAPRTYTHATAESQLADEEAAGEEGHTTFVRDEQKIGRNDPCPCGSGK) are disordered. The span at 871 to 886 (EEGHTTFVRDEQKIGR) shows a compositional bias: basic and acidic residues. Zn(2+)-binding residues include Cys890, Cys892, Cys901, and His902.

It belongs to the SecA family. As to quaternary structure, monomer and homodimer. Part of the essential Sec protein translocation apparatus which comprises SecA, SecYEG and auxiliary proteins SecDF-YajC and YidC. Zn(2+) serves as cofactor.

It is found in the cell inner membrane. The protein resides in the cytoplasm. The catalysed reaction is ATP + H2O + cellular proteinSide 1 = ADP + phosphate + cellular proteinSide 2.. Its function is as follows. Part of the Sec protein translocase complex. Interacts with the SecYEG preprotein conducting channel. Has a central role in coupling the hydrolysis of ATP to the transfer of proteins into and across the cell membrane, serving both as a receptor for the preprotein-SecB complex and as an ATP-driven molecular motor driving the stepwise translocation of polypeptide chains across the membrane. This Aeromonas salmonicida (strain A449) protein is Protein translocase subunit SecA.